Consider the following 274-residue polypeptide: NH(3)-dependent NAD(+) synthetase (274 aa).

Residue 46–53 (GISGGQDS) participates in ATP binding. Mg(2+) is bound at residue Asp-52. Arg-140 is a binding site for deamido-NAD(+). Position 160 (Thr-160) interacts with ATP. Glu-165 contributes to the Mg(2+) binding site. Deamido-NAD(+)-binding residues include Lys-173 and Asp-180. 2 residues coordinate ATP: Lys-189 and Thr-211. Residue 260–261 (HK) participates in deamido-NAD(+) binding.

It belongs to the NAD synthetase family. As to quaternary structure, homodimer.

It carries out the reaction deamido-NAD(+) + NH4(+) + ATP = AMP + diphosphate + NAD(+) + H(+). It functions in the pathway cofactor biosynthesis; NAD(+) biosynthesis; NAD(+) from deamido-NAD(+) (ammonia route): step 1/1. In terms of biological role, catalyzes the ATP-dependent amidation of deamido-NAD to form NAD. Uses ammonia as a nitrogen source. This is NH(3)-dependent NAD(+) synthetase from Streptococcus pneumoniae (strain 70585).